The chain runs to 327 residues: Secondary metabolism regulator LAE1 (327 aa).

Belongs to the methyltransferase superfamily. LaeA methyltransferase family.

Its subcellular location is the nucleus. The catalysed reaction is L-methionyl-[protein] + S-adenosyl-L-methionine = S-methyl-L-methionyl-[protein] + S-adenosyl-L-homocysteine. Functionally, secondary metabolism regulator that controls the expression of the tenuazonic acid biosynthesis cluster. Methyltransferase that performs automethylation. No other methyl-accepting substrate has been identified yet. The chain is Secondary metabolism regulator LAE1 from Pyricularia oryzae (strain 70-15 / ATCC MYA-4617 / FGSC 8958) (Rice blast fungus).